The chain runs to 211 residues: MHDPQDVMMNLVPIVVEQTSRGERSFDIYSRLLKERIIFITGPIEDHMASLIIAQLLFLESENPKKEISMYINSPGGVVSAGLGIYDTMQYIRSPVSTMCLGMAASMGSLLLTAGEKDMRFAAPNARIMVHQPSGGFRGQASDIERHAADIQKIKRRLNEIYVHHTGRTYDEIESALDRDNFMSAQEGLEFGLVDKVIERRAEDEKEGSDS.

The active-site Nucleophile is Ser106. The active site involves His131.

It belongs to the peptidase S14 family. Fourteen ClpP subunits assemble into 2 heptameric rings which stack back to back to give a disk-like structure with a central cavity, resembling the structure of eukaryotic proteasomes.

Its subcellular location is the cytoplasm. It carries out the reaction Hydrolysis of proteins to small peptides in the presence of ATP and magnesium. alpha-casein is the usual test substrate. In the absence of ATP, only oligopeptides shorter than five residues are hydrolyzed (such as succinyl-Leu-Tyr-|-NHMec, and Leu-Tyr-Leu-|-Tyr-Trp, in which cleavage of the -Tyr-|-Leu- and -Tyr-|-Trp bonds also occurs).. Its function is as follows. Cleaves peptides in various proteins in a process that requires ATP hydrolysis. Has a chymotrypsin-like activity. Plays a major role in the degradation of misfolded proteins. The protein is ATP-dependent Clp protease proteolytic subunit of Maricaulis maris (strain MCS10) (Caulobacter maris).